The chain runs to 520 residues: Sodium-dependent dicarboxylate transporter SdcS (520 aa).

14 helical membrane-spanning segments follow: residues 30–50 (AGQLIGLILGPLLFLLTLLFF), 55–75 (LPWKGVYVLAITLWIATWWIT), 77–97 (AIPIAATSLLPIVLLPLGHIL), 104–124 (SEYGNDIIFLFLGGFILAIAM), 160–180 (SMFVSNTAAVMIMIPIGLAII), 207–227 (IGYAGTIGGLGTLIGTPPLII), 242–262 (FAKWMIVGIPTVIVLLGITWL), 298–318 (KVVQTIFVLASLLWITREFLL), 323–343 (VTSSVADGTIAIFISILLFII), 362–382 (ELPWGVLILFGGGLALAKGIS), 399–419 (GVSPILIVIVITIFVLFLTEV), 428–448 (MILPILATLSVAVGVHPLLLM), 452–472 (AMAANCAYMLPVGTPPNAIIF), and 491–511 (LISAIIIILVVYYVMPIVLGI).

This sequence belongs to the SLC13A/DASS transporter (TC 2.A.47) family. NADC subfamily.

It localises to the cell membrane. Its function is as follows. Mediates the transport of the dicarboxylates fumarate, malate, and succinate across the cytoplasmic membrane via a Na(+)-electrochemical gradient. The protein is Sodium-dependent dicarboxylate transporter SdcS (sdcS) of Staphylococcus aureus (strain USA300).